We begin with the raw amino-acid sequence, 207 residues long: Uracil phosphoribosyltransferase (207 aa).

5-phospho-alpha-D-ribose 1-diphosphate contacts are provided by residues Arg-77, Arg-102, and 129–137 (DPMLATGGS). Uracil contacts are provided by residues Ile-192 and 197-199 (GDA). Residue Asp-198 coordinates 5-phospho-alpha-D-ribose 1-diphosphate.

It belongs to the UPRTase family. Requires Mg(2+) as cofactor.

The enzyme catalyses UMP + diphosphate = 5-phospho-alpha-D-ribose 1-diphosphate + uracil. It functions in the pathway pyrimidine metabolism; UMP biosynthesis via salvage pathway; UMP from uracil: step 1/1. Allosterically activated by GTP. In terms of biological role, catalyzes the conversion of uracil and 5-phospho-alpha-D-ribose 1-diphosphate (PRPP) to UMP and diphosphate. This Mycoplasma capricolum subsp. capricolum (strain California kid / ATCC 27343 / NCTC 10154) protein is Uracil phosphoribosyltransferase.